The chain runs to 316 residues: 4-hydroxy-3-methylbut-2-enyl diphosphate reductase (316 aa).

[4Fe-4S] cluster is bound at residue cysteine 12. The (2E)-4-hydroxy-3-methylbut-2-enyl diphosphate site is built by histidine 41 and histidine 74. The dimethylallyl diphosphate site is built by histidine 41 and histidine 74. 2 residues coordinate isopentenyl diphosphate: histidine 41 and histidine 74. [4Fe-4S] cluster is bound at residue cysteine 96. Residue histidine 124 coordinates (2E)-4-hydroxy-3-methylbut-2-enyl diphosphate. A dimethylallyl diphosphate-binding site is contributed by histidine 124. Position 124 (histidine 124) interacts with isopentenyl diphosphate. Glutamate 126 (proton donor) is an active-site residue. Threonine 168 provides a ligand contact to (2E)-4-hydroxy-3-methylbut-2-enyl diphosphate. Cysteine 198 is a binding site for [4Fe-4S] cluster. (2E)-4-hydroxy-3-methylbut-2-enyl diphosphate contacts are provided by serine 226, serine 227, asparagine 228, and serine 270. Residues serine 226, serine 227, asparagine 228, and serine 270 each contribute to the dimethylallyl diphosphate site. Isopentenyl diphosphate is bound by residues serine 226, serine 227, asparagine 228, and serine 270.

The protein belongs to the IspH family. It depends on [4Fe-4S] cluster as a cofactor.

It carries out the reaction isopentenyl diphosphate + 2 oxidized [2Fe-2S]-[ferredoxin] + H2O = (2E)-4-hydroxy-3-methylbut-2-enyl diphosphate + 2 reduced [2Fe-2S]-[ferredoxin] + 2 H(+). The enzyme catalyses dimethylallyl diphosphate + 2 oxidized [2Fe-2S]-[ferredoxin] + H2O = (2E)-4-hydroxy-3-methylbut-2-enyl diphosphate + 2 reduced [2Fe-2S]-[ferredoxin] + 2 H(+). The protein operates within isoprenoid biosynthesis; dimethylallyl diphosphate biosynthesis; dimethylallyl diphosphate from (2E)-4-hydroxy-3-methylbutenyl diphosphate: step 1/1. It functions in the pathway isoprenoid biosynthesis; isopentenyl diphosphate biosynthesis via DXP pathway; isopentenyl diphosphate from 1-deoxy-D-xylulose 5-phosphate: step 6/6. In terms of biological role, catalyzes the conversion of 1-hydroxy-2-methyl-2-(E)-butenyl 4-diphosphate (HMBPP) into a mixture of isopentenyl diphosphate (IPP) and dimethylallyl diphosphate (DMAPP). Acts in the terminal step of the DOXP/MEP pathway for isoprenoid precursor biosynthesis. The sequence is that of 4-hydroxy-3-methylbut-2-enyl diphosphate reductase from Acinetobacter baumannii (strain AB307-0294).